A 130-amino-acid polypeptide reads, in one-letter code: Small ribosomal subunit protein uS8 (130 aa).

It belongs to the universal ribosomal protein uS8 family. In terms of assembly, part of the 30S ribosomal subunit.

One of the primary rRNA binding proteins, it binds directly to 16S rRNA central domain where it helps coordinate assembly of the platform of the 30S subunit. This is Small ribosomal subunit protein uS8 from Haloquadratum walsbyi (strain DSM 16790 / HBSQ001).